The chain runs to 151 residues: Glycine and methionine-rich protein (151 aa).

A signal peptide spans 1–19 (MKTAVVLAAFSALMALARA).

As to expression, component of the acid-insoluble and acid-soluble organic matrix of calcified layers of the shell (at protein level).

It localises to the secreted. The protein is Glycine and methionine-rich protein of Lottia gigantea (Giant owl limpet).